Consider the following 418-residue polypeptide: Voltage-gated ClC-type chloride channel ClcB (418 aa).

10 helical membrane passes run 5-25 (LLIA…FRHA), 54-74 (LLTP…WQKF), 146-166 (LWIA…PLAG), 168-188 (LFIA…PVII), 222-242 (ALII…LTLM), 258-278 (WQLA…PAVW), 291-311 (APPL…AVLA), 316-336 (GAPG…GMLY), 352-372 (LLLG…APIM), and 380-400 (MTGE…ASVI).

Belongs to the chloride channel (TC 2.A.49) family. ClcB subfamily.

The protein resides in the cell inner membrane. Probably acts as an electrical shunt for an outwardly-directed proton pump that is linked to amino acid decarboxylation, as part of the extreme acid resistance (XAR) response. This Escherichia coli O17:K52:H18 (strain UMN026 / ExPEC) protein is Voltage-gated ClC-type chloride channel ClcB.